The sequence spans 99 residues: Large ribosomal subunit protein eL36 (99 aa).

Belongs to the eukaryotic ribosomal protein eL36 family. In terms of assembly, component of the large ribosomal subunit. Mature ribosomes consist of a small (40S) and a large (60S) subunit. The 40S subunit contains about 32 different proteins and 1 molecule of RNA (18S). The 60S subunit contains 45 different proteins and 3 molecules of RNA (25S, 5.8S and 5S).

Its subcellular location is the cytoplasm. Functionally, component of the ribosome, a large ribonucleoprotein complex responsible for the synthesis of proteins in the cell. The small ribosomal subunit (SSU) binds messenger RNAs (mRNAs) and translates the encoded message by selecting cognate aminoacyl-transfer RNA (tRNA) molecules. The large subunit (LSU) contains the ribosomal catalytic site termed the peptidyl transferase center (PTC), which catalyzes the formation of peptide bonds, thereby polymerizing the amino acids delivered by tRNAs into a polypeptide chain. The nascent polypeptides leave the ribosome through a tunnel in the LSU and interact with protein factors that function in enzymatic processing, targeting, and the membrane insertion of nascent chains at the exit of the ribosomal tunnel. In Candida albicans (strain SC5314 / ATCC MYA-2876) (Yeast), this protein is Large ribosomal subunit protein eL36.